We begin with the raw amino-acid sequence, 208 residues long: Uracil phosphoribosyltransferase (208 aa).

Residues Arg-78, Arg-103, and 130–138 each bind 5-phospho-alpha-D-ribose 1-diphosphate; that span reads DPMLATGGS. Residues Ile-193 and 198–200 contribute to the uracil site; that span reads GDA. Asp-199 is a binding site for 5-phospho-alpha-D-ribose 1-diphosphate.

Belongs to the UPRTase family. Requires Mg(2+) as cofactor.

It catalyses the reaction UMP + diphosphate = 5-phospho-alpha-D-ribose 1-diphosphate + uracil. Its pathway is pyrimidine metabolism; UMP biosynthesis via salvage pathway; UMP from uracil: step 1/1. Its activity is regulated as follows. Allosterically activated by GTP. Catalyzes the conversion of uracil and 5-phospho-alpha-D-ribose 1-diphosphate (PRPP) to UMP and diphosphate. The polypeptide is Uracil phosphoribosyltransferase (Shewanella frigidimarina (strain NCIMB 400)).